Here is a 656-residue protein sequence, read N- to C-terminus: tRNA 5-methylaminomethyl-2-thiouridine biosynthesis bifunctional protein MnmC (656 aa).

The tRNA (mnm(5)s(2)U34)-methyltransferase stretch occupies residues 1–236 (MTDPLIPAVL…KRAMLVGHFA (236 aa)). The interval 260-656 (IGAGLAGCAV…LRALRQGAVS (397 aa)) is FAD-dependent cmnm(5)s(2)U34 oxidoreductase.

It in the N-terminal section; belongs to the methyltransferase superfamily. tRNA (mnm(5)s(2)U34)-methyltransferase family. This sequence in the C-terminal section; belongs to the DAO family. FAD is required as a cofactor.

It is found in the cytoplasm. It catalyses the reaction 5-aminomethyl-2-thiouridine(34) in tRNA + S-adenosyl-L-methionine = 5-methylaminomethyl-2-thiouridine(34) in tRNA + S-adenosyl-L-homocysteine + H(+). Functionally, catalyzes the last two steps in the biosynthesis of 5-methylaminomethyl-2-thiouridine (mnm(5)s(2)U) at the wobble position (U34) in tRNA. Catalyzes the FAD-dependent demodification of cmnm(5)s(2)U34 to nm(5)s(2)U34, followed by the transfer of a methyl group from S-adenosyl-L-methionine to nm(5)s(2)U34, to form mnm(5)s(2)U34. The chain is tRNA 5-methylaminomethyl-2-thiouridine biosynthesis bifunctional protein MnmC from Paraburkholderia phytofirmans (strain DSM 17436 / LMG 22146 / PsJN) (Burkholderia phytofirmans).